A 551-amino-acid chain; its full sequence is Glucose-6-phosphate isomerase 2 (551 aa).

E359 (proton donor) is an active-site residue. Catalysis depends on residues H390 and K514.

This sequence belongs to the GPI family.

Its subcellular location is the cytoplasm. It carries out the reaction alpha-D-glucose 6-phosphate = beta-D-fructose 6-phosphate. It functions in the pathway carbohydrate biosynthesis; gluconeogenesis. The protein operates within carbohydrate degradation; glycolysis; D-glyceraldehyde 3-phosphate and glycerone phosphate from D-glucose: step 2/4. In terms of biological role, catalyzes the reversible isomerization of glucose-6-phosphate to fructose-6-phosphate. The chain is Glucose-6-phosphate isomerase 2 from Streptomyces coelicolor (strain ATCC BAA-471 / A3(2) / M145).